Consider the following 3341-residue polypeptide: Genome polyprotein (3341 aa).

Basic and acidic residues-rich tracts occupy residues 1–14 and 24–35; these read MKRKDLEARGKAPG and REGRRKDKDKGG. Positions 1–57 are disordered; that stretch reads MKRKDLEARGKAPGRDSSTPFWGREGRRKDKDKGGESPSNRQVTLKTPIQSGRRAGK. Over 1 to 120 the chain is Cytoplasmic; sequence MKRKDLEARG…LESRRTTGNP (120 aa). Polar residues predominate over residues 37–50; it reads SPSNRQVTLKTPIQ. Residues 55–97 form a hydrophobic; homodimerization of capsid protein C region; it reads AGKRQRVGLLGRLGVGWGSFLQEDIVQALIHMALVLHALFASI. Residues 117-136 constitute a propeptide, ER anchor for the capsid protein C, removed in mature form by serine protease NS3; it reads TGNPMTLAFILGFLTVLCGC. The chain crosses the membrane as a helical span at residues 121–141; that stretch reads MTLAFILGFLTVLCGCVVIDM. Residues 142-245 lie on the Extracellular side of the membrane; it reads QVSTTRGTEI…AFKTIRENKT (104 aa). Asn157 and Asn243 each carry an N-linked (GlcNAc...) asparagine; by host glycan. The chain crosses the membrane as a helical span at residues 246–262; sequence IFIVALLCVAIAKRWPT. A topological domain (cytoplasmic) is located at residue Trp263. A helical membrane pass occupies residues 264 to 278; the sequence is VVILLAIGTWTTVKG. Topologically, residues 279–665 are extracellular; sequence EFVEPLYTLK…GVWQDLVGKF (387 aa). Asn339 is a glycosylation site (N-linked (GlcNAc...) asparagine; by host). The segment at 371–384 is involved in fusion; the sequence is NRGWGTGCFKWGIG. N-linked (GlcNAc...) asparagine; by host glycans are attached at residues Asn399, Asn411, Asn575, and Asn611. The chain crosses the membrane as a helical span at residues 666-686; it reads SVGAFFSNTALLVILVLAALI. The Cytoplasmic portion of the chain corresponds to 687–689; that stretch reads DKR. A helical membrane pass occupies residues 690 to 705; the sequence is IAFLLVLGGYFYYVRA. Over 706 to 1138 the chain is Extracellular; the sequence is DLGCGIDTTR…AKTRTSTLTR (433 aa). Residues Asn794, Asn896, Asn993, and Asn1027 are each glycosylated (N-linked (GlcNAc...) asparagine; by host). Residues 1139–1159 form a helical membrane-spanning segment; the sequence is LFLTILAMALFGLPNLFSSVG. The Cytoplasmic portion of the chain corresponds to 1160–1178; sequence LSAWVLLVASSSAQPQDLS. Residues 1179-1199 form a helical membrane-spanning segment; it reads MNLWIVLQTGSSAVLLLGYMI. Residues 1200 to 1204 lie on the Lumenal side of the membrane; it reads RRKLA. The helical transmembrane segment at 1205 to 1225 threads the bilayer; it reads MVLGVHHLVTLMCVQFLFSAV. Topologically, residues 1226 to 1231 are cytoplasmic; the sequence is DRYQKY. Residues 1232 to 1252 form a helical membrane-spanning segment; sequence LYGLLELMASVVLLSAYKSVL. The Lumenal portion of the chain corresponds to 1253–1261; sequence QALPPEVLC. Residues 1262-1282 traverse the membrane as a helical segment; the sequence is FSLVMGWKTALSLATVVFLIF. Topologically, residues 1283–1303 are cytoplasmic; the sequence is SLNAMYKYACQYHNPRNGYRD. Residues 1304 to 1324 traverse the membrane as a helical segment; sequence SGANLWFWTVSLASAGGIWAA. The Lumenal segment spans residues 1325-1326; the sequence is EK. A helical membrane pass occupies residues 1327–1347; it reads AHQPTVAAVLAFTMVVLFLYM. Residues 1348–1403 are Cytoplasmic-facing; the sequence is EQTNVSMELEFISAGETPEGVSTENDDGINIPDLKGRYGEDGIVVGAASSSGYLPE. The helical intramembrane region spans 1404-1424; sequence LVFVFLLGFAVTSTSYFLGAL. At 1425 to 2089 the chain is on the cytoplasmic side; sequence YLLIATSTNL…TERSLTVVMA (665 aa). The Peptidase S7 domain maps to 1452–1630; sequence SDDLLGLGGP…KPTDVTESLN (179 aa). Active-site charge relay system; for serine protease NS3 activity residues include His1506, Asp1530, and Ser1589. Residues 1627 to 1780 enclose the Helicase ATP-binding domain; the sequence is ESLNCDSTRR…SNYAISDQSI (154 aa). 1640–1647 contributes to the ATP binding site; the sequence is WHPGKGKT. The DECH box signature appears at 1729-1732; that stretch reads DECH. Positions 1793-1947 constitute a Helicase C-terminal domain; that stretch reads NVQKSVGAKK…TFMLEEAAYS (155 aa). The chain crosses the membrane as a helical span at residues 2090-2110; it reads FVLGVSIMLSCFIAVWALCFL. Residues 2111–2145 lie on the Lumenal side of the membrane; the sequence is FSLFRPKKATYEQMPSSDPLSGGVLVSTPSVLYCM. Residues 2146–2166 form a helical membrane-spanning segment; it reads GVPLGFCVVITLAMFLVYPVL. Topologically, residues 2167–2178 are cytoplasmic; the sequence is YKSIGNRSYMDS. A helical membrane pass occupies residues 2179–2199; it reads DLVKWVILGSCLICGVLAWEM. Topologically, residues 2200–2242 are lumenal; sequence RMFPNIRSDLMELVKAVKEPEEVVNSGPSFPSWEIAQGKGATM. A helical transmembrane segment spans residues 2243-2263; it reads LDSLQVFFFITVLSTKFLYWF. Residues 2264 to 2302 lie on the Cytoplasmic side of the membrane; that stretch reads QENWTARMYAMKHPEMVSSIGGFRFDEIPFRAVLPSGFA. Residues 2303–2323 constitute an intramembrane region (helical); that stretch reads IVAIASLPSVVVGLLAAGVFM. The Cytoplasmic segment spans residues 2324–2366; the sequence is AIMYCQNKWNATPKILTALDARDQRHDRPTEITSRVPLENTRS. The helical transmembrane segment at 2367–2387 threads the bilayer; it reads IMYAFCLIFSLFWAFCTRSPG. Residues 2388-2412 are Lumenal-facing; the sequence is DFLRGSLVVGASMWQILHPRSKIHD. A helical transmembrane segment spans residues 2413–2433; that stretch reads VMDFGSMVSAIGLLEMNYLFY. At 2434–3341 the chain is on the cytoplasmic side; that stretch reads RFMHIAARAL…SRYRRGNDVI (908 aa). The region spanning 2454–2706 is the mRNA cap 0-1 NS5-type MT domain; the sequence is ALEKSTTIGL…SPVLPKGTRA (253 aa). Position 2497 (Ser2497) interacts with S-adenosyl-L-methionine. Lys2509 (for 2'-O-MTase activity) is an active-site residue. Gly2527, Trp2528, Thr2545, Ile2546, Asp2572, and Val2573 together coordinate S-adenosyl-L-methionine. The active-site For 2'-O-MTase activity is the Asp2587. Ile2588 contacts S-adenosyl-L-methionine. Active-site for 2'-O-MTase activity residues include Lys2624 and Glu2660. Residue Tyr2662 coordinates S-adenosyl-L-methionine. 4 residues coordinate Zn(2+): Glu2881, His2885, Cys2890, and Cys2893. Residues 2970–3117 form the RdRp catalytic domain; it reads KYLIADDIAG…STDNRDFSSA (148 aa). Zn(2+) contacts are provided by His3152, Cys3168, and Cys3287.

It in the N-terminal section; belongs to the class I-like SAM-binding methyltransferase superfamily. mRNA cap 0-1 NS5-type methyltransferase family. In terms of assembly, homodimer. As to quaternary structure, forms heterodimers with envelope protein E in the endoplasmic reticulum and Golgi. Homodimer; in the endoplasmic reticulum and Golgi. In terms of assembly, forms homodimers as well as homohexamers. NS1 may interact with NS4A. As to quaternary structure, forms a heterodimer with serine protease NS3. May form homooligomers. Forms a heterodimer with NS2B. Interacts with NS4B. Interacts with unphosphorylated RNA-directed RNA polymerase NS5; this interaction stimulates RNA-directed RNA polymerase NS5 guanylyltransferase activity. In terms of assembly, interacts with serine protease NS3. As to quaternary structure, interacts with host STAT2; this interaction inhibits the phosphorylation of the latter, and, when all viral proteins are present (polyprotein), targets STAT2 for degradation. Post-translationally, genome polyprotein: Specific enzymatic cleavages in vivo yield mature proteins. Cleavages in the lumen of endoplasmic reticulum are performed by host signal peptidase, whereas cleavages in the cytoplasmic side are performed by serine protease NS3. Signal cleavage at the 2K-4B site requires a prior NS3 protease-mediated cleavage at the 4A-2K site. Cleaved in post-Golgi vesicles by a host furin, releasing the mature small envelope protein M, and peptide pr. This cleavage is incomplete as up to 30% of viral particles still carry uncleaved prM. In terms of processing, N-glycosylated. Post-translationally, N-glycosylated. The excreted form is glycosylated and this is required for efficient secretion of the protein from infected cells. Phosphorylated on serines residues. This phosphorylation may trigger NS5 nuclear localization.

It is found in the virion. The protein resides in the host nucleus. It localises to the secreted. The protein localises to the virion membrane. Its subcellular location is the host endoplasmic reticulum membrane. It carries out the reaction Selective hydrolysis of -Xaa-Xaa-|-Yaa- bonds in which each of the Xaa can be either Arg or Lys and Yaa can be either Ser or Ala.. The catalysed reaction is RNA(n) + a ribonucleoside 5'-triphosphate = RNA(n+1) + diphosphate. The enzyme catalyses a ribonucleoside 5'-triphosphate + H2O = a ribonucleoside 5'-diphosphate + phosphate + H(+). It catalyses the reaction ATP + H2O = ADP + phosphate + H(+). It carries out the reaction a 5'-end (5'-triphosphoguanosine)-ribonucleoside in mRNA + S-adenosyl-L-methionine = a 5'-end (N(7)-methyl 5'-triphosphoguanosine)-ribonucleoside in mRNA + S-adenosyl-L-homocysteine. The catalysed reaction is a 5'-end (N(7)-methyl 5'-triphosphoguanosine)-ribonucleoside in mRNA + S-adenosyl-L-methionine = a 5'-end (N(7)-methyl 5'-triphosphoguanosine)-(2'-O-methyl-ribonucleoside) in mRNA + S-adenosyl-L-homocysteine + H(+). Its function is as follows. Plays a role in virus budding by binding to the cell membrane and gathering the viral RNA into a nucleocapsid that forms the core of a mature virus particle. During virus entry, may induce genome penetration into the host cytoplasm after hemifusion induced by the surface proteins. Can migrate to the cell nucleus where it modulates host functions. Functionally, prevents premature fusion activity of envelope proteins in trans-Golgi by binding to envelope protein E at pH6.0. After virion release in extracellular space, gets dissociated from E dimers. Acts as a chaperone for envelope protein E during intracellular virion assembly by masking and inactivating envelope protein E fusion peptide. prM is the only viral peptide matured by host furin in the trans-Golgi network probably to avoid catastrophic activation of the viral fusion activity in acidic Golgi compartment prior to virion release. prM-E cleavage is inefficient, and many virions are only partially matured. These uncleaved prM would play a role in immune evasion. In terms of biological role, may play a role in virus budding. Exerts cytotoxic effects by activating a mitochondrial apoptotic pathway through M ectodomain. May display a viroporin activity. Its function is as follows. Binds to host cell surface receptor and mediates fusion between viral and cellular membranes. Envelope protein is synthesized in the endoplasmic reticulum in the form of heterodimer with protein prM. They play a role in virion budding in the ER, and the newly formed immature particle is covered with 60 spikes composed of heterodimer between precursor prM and envelope protein E. The virion is transported to the Golgi apparatus where the low pH causes dissociation of PrM-E heterodimers and formation of E homodimers. prM-E cleavage is inefficient, and many virions are only partially matured. These uncleaved prM would play a role in immune evasion. Functionally, involved in immune evasion, pathogenesis and viral replication. Once cleaved off the polyprotein, is targeted to three destinations: the viral replication cycle, the plasma membrane and the extracellular compartment. May play a role in viral genome replication. Assist membrane bending and envelopment of genomic RNA at the endoplasmic reticulum. Excreted as a hexameric lipoparticle that plays a role against host immune response. Component of the viral RNA replication complex that functions in virion assembly and antagonizes the host immune response. In terms of biological role, required cofactor for the serine protease function of NS3. May have membrane-destabilizing activity and form viroporins. Its function is as follows. Displays three enzymatic activities: serine protease, NTPase and RNA helicase. NS3 serine protease, in association with NS2B, performs its autocleavage and cleaves the polyprotein at dibasic sites in the cytoplasm: C-prM, NS2A-NS2B, NS2B-NS3, NS3-NS4A, NS4A-2K and NS4B-NS5. NS3 RNA helicase binds RNA and unwinds dsRNA in the 3' to 5' direction. Functionally, regulates the ATPase activity of the NS3 helicase activity. NS4A allows NS3 helicase to conserve energy during unwinding. Functions as a signal peptide for NS4B and is required for the interferon antagonism activity of the latter. In terms of biological role, inhibits interferon (IFN)-induced host STAT1 phosphorylation and nuclear translocation, thereby preventing the establishment of a cellular antiviral state by blocking the IFN-alpha/beta pathway. Its function is as follows. Replicates the viral (+) and (-) RNA genome, and performs the capping of genomes in the cytoplasm. NS5 methylates viral RNA cap at guanine N-7 and ribose 2'-O positions. Besides its role in RNA genome replication, also prevents the establishment of cellular antiviral state by blocking the interferon-alpha/beta (IFN-alpha/beta) signaling pathway. Inhibits host TYK2 and STAT2 phosphorylation, thereby preventing activation of JAK-STAT signaling pathway. The protein is Genome polyprotein of Aedes (CFA flavivirus).